Consider the following 209-residue polypeptide: Probable glutathione peroxidase 8-A (209 aa).

The helical transmembrane segment at 18 to 40 threads the bilayer; that stretch reads VSVVFLSMLLCTGILCVLQLGFL. C79 is a catalytic residue.

This sequence belongs to the glutathione peroxidase family.

The protein localises to the membrane. It carries out the reaction 2 glutathione + H2O2 = glutathione disulfide + 2 H2O. This chain is Probable glutathione peroxidase 8-A (gpx8-a), found in Xenopus laevis (African clawed frog).